Here is a 435-residue protein sequence, read N- to C-terminus: Putative acid phosphatase F26C11.1 (435 aa).

The active-site Nucleophile is H38. D317 acts as the Proton donor in catalysis. C382 and C388 form a disulfide bridge.

Belongs to the histidine acid phosphatase family.

It catalyses the reaction a phosphate monoester + H2O = an alcohol + phosphate. This chain is Putative acid phosphatase F26C11.1, found in Caenorhabditis elegans.